The primary structure comprises 195 residues: ATP-dependent Clp protease proteolytic subunit 2 (195 aa).

The active-site Nucleophile is Ser98. His123 is an active-site residue.

Belongs to the peptidase S14 family. Fourteen ClpP subunits assemble into 2 heptameric rings which stack back to back to give a disk-like structure with a central cavity, resembling the structure of eukaryotic proteasomes.

It localises to the cytoplasm. It carries out the reaction Hydrolysis of proteins to small peptides in the presence of ATP and magnesium. alpha-casein is the usual test substrate. In the absence of ATP, only oligopeptides shorter than five residues are hydrolyzed (such as succinyl-Leu-Tyr-|-NHMec, and Leu-Tyr-Leu-|-Tyr-Trp, in which cleavage of the -Tyr-|-Leu- and -Tyr-|-Trp bonds also occurs).. Cleaves peptides in various proteins in a process that requires ATP hydrolysis. Has a chymotrypsin-like activity. Plays a major role in the degradation of misfolded proteins. ClpXP2 is involved in the complete degradation of the Site-2 clipped anti-sigma-W factor RsiW. This results in the release of SigW and the transcription activation of the genes under the control of the sigma-W factor. The chain is ATP-dependent Clp protease proteolytic subunit 2 from Shouchella clausii (strain KSM-K16) (Alkalihalobacillus clausii).